The following is a 281-amino-acid chain: Ribosomal RNA large subunit methyltransferase J (281 aa).

S-adenosyl-L-methionine contacts are provided by residues H19, H42, S101, E119, 144–145, and D165; that span reads NG. D165 serves as the catalytic Proton acceptor.

This sequence belongs to the RlmJ family. In terms of assembly, monomer.

The catalysed reaction is adenosine(2030) in 23S rRNA + S-adenosyl-L-methionine = N(6)-methyladenosine(2030) in 23S rRNA + S-adenosyl-L-homocysteine + H(+). Specifically methylates the adenine in position 2030 of 23S rRNA. The polypeptide is Ribosomal RNA large subunit methyltransferase J (Haemophilus influenzae (strain ATCC 51907 / DSM 11121 / KW20 / Rd)).